The primary structure comprises 166 residues: Interferon gamma (166 aa).

Positions 1-23 (MNYTSYILAFQLCVILGSSGCYC) are cleaved as a signal peptide. The residue at position 24 (Q24) is a Pyrrolidone carboxylic acid. Residues N39 and N106 are each glycosylated (N-linked (GlcNAc...) asparagine). The disordered stretch occupies residues 147–166 (SNLRKRKRRQNQIQGRRASK).

The protein belongs to the type II (or gamma) interferon family. In terms of assembly, homodimer. Interacts with IFNGR1 (via extracellular domain); this interaction promotes IFNGR1 dimerization. In terms of tissue distribution, released primarily from activated T lymphocytes.

The protein localises to the secreted. Functionally, type II interferon produced by immune cells such as T-cells and NK cells that plays crucial roles in antimicrobial, antiviral, and antitumor responses by activating effector immune cells and enhancing antigen presentation. Primarily signals through the JAK-STAT pathway after interaction with its receptor IFNGR1 to affect gene regulation. Upon IFNG binding, IFNGR1 intracellular domain opens out to allow association of downstream signaling components JAK2, JAK1 and STAT1, leading to STAT1 activation, nuclear translocation and transcription of IFNG-regulated genes. Many of the induced genes are transcription factors such as IRF1 that are able to further drive regulation of a next wave of transcription. Plays a role in class I antigen presentation pathway by inducing a replacement of catalytic proteasome subunits with immunoproteasome subunits. In turn, increases the quantity, quality, and repertoire of peptides for class I MHC loading. Increases the efficiency of peptide generation also by inducing the expression of activator PA28 that associates with the proteasome and alters its proteolytic cleavage preference. Up-regulates as well MHC II complexes on the cell surface by promoting expression of several key molecules such as cathepsins B/CTSB, H/CTSH, and L/CTSL. Participates in the regulation of hematopoietic stem cells during development and under homeostatic conditions by affecting their development, quiescence, and differentiation. This Lama glama (Llama) protein is Interferon gamma (IFNG).